Consider the following 354-residue polypeptide: DNA polymerase IV (354 aa).

One can recognise a UmuC domain in the interval 6–187; the sequence is IIHIDCDCFY…LPVTKLHGVG (182 aa). Residues aspartate 10 and aspartate 105 each contribute to the Mg(2+) site. The active site involves glutamate 106.

Belongs to the DNA polymerase type-Y family. As to quaternary structure, monomer. Mg(2+) serves as cofactor.

The protein resides in the cytoplasm. It catalyses the reaction DNA(n) + a 2'-deoxyribonucleoside 5'-triphosphate = DNA(n+1) + diphosphate. Functionally, poorly processive, error-prone DNA polymerase involved in untargeted mutagenesis. Copies undamaged DNA at stalled replication forks, which arise in vivo from mismatched or misaligned primer ends. These misaligned primers can be extended by PolIV. Exhibits no 3'-5' exonuclease (proofreading) activity. May be involved in translesional synthesis, in conjunction with the beta clamp from PolIII. In Pseudomonas syringae pv. syringae (strain B728a), this protein is DNA polymerase IV.